We begin with the raw amino-acid sequence, 138 residues long: ATP synthase epsilon chain (138 aa).

It belongs to the ATPase epsilon chain family. As to quaternary structure, F-type ATPases have 2 components, CF(1) - the catalytic core - and CF(0) - the membrane proton channel. CF(1) has five subunits: alpha(3), beta(3), gamma(1), delta(1), epsilon(1). CF(0) has three main subunits: a, b and c.

It is found in the cell membrane. In terms of biological role, produces ATP from ADP in the presence of a proton gradient across the membrane. This is ATP synthase epsilon chain from Streptococcus gordonii (strain Challis / ATCC 35105 / BCRC 15272 / CH1 / DL1 / V288).